Consider the following 41-residue polypeptide: uncharacterized protein (41 aa).

Positions methionine 1 to proline 41 are disordered. Residues histidine 17 to proline 41 show a composition bias toward basic and acidic residues.

This is an uncharacterized protein from Bacillus subtilis (strain 168).